The following is a 226-amino-acid chain: UPF0173 metal-dependent hydrolase Msed_2125 (226 aa).

This sequence belongs to the UPF0173 family.

This Metallosphaera sedula (strain ATCC 51363 / DSM 5348 / JCM 9185 / NBRC 15509 / TH2) protein is UPF0173 metal-dependent hydrolase Msed_2125.